A 20-amino-acid chain; its full sequence is Cytochrome c oxidase subunit 7B-heart, mitochondrial (20 aa).

Belongs to the cytochrome c oxidase VIIb family. As to quaternary structure, component of the cytochrome c oxidase (complex IV, CIV), a multisubunit enzyme composed of 14 subunits. The complex is composed of a catalytic core of 3 subunits MT-CO1, MT-CO2 and MT-CO3, encoded in the mitochondrial DNA, and 11 supernumerary subunits COX4I, COX5A, COX5B, COX6A, COX6B, COX6C, COX7A, COX7B, COX7C, COX8 and NDUFA4, which are encoded in the nuclear genome. The complex exists as a monomer or a dimer and forms supercomplexes (SCs) in the inner mitochondrial membrane with NADH-ubiquinone oxidoreductase (complex I, CI) and ubiquinol-cytochrome c oxidoreductase (cytochrome b-c1 complex, complex III, CIII), resulting in different assemblies (supercomplex SCI(1)III(2)IV(1) and megacomplex MCI(2)III(2)IV(2)).

The protein localises to the mitochondrion inner membrane. The enzyme catalyses 4 Fe(II)-[cytochrome c] + O2 + 8 H(+)(in) = 4 Fe(III)-[cytochrome c] + 2 H2O + 4 H(+)(out). The protein operates within energy metabolism; oxidative phosphorylation. Functionally, component of the cytochrome c oxidase, the last enzyme in the mitochondrial electron transport chain which drives oxidative phosphorylation. The respiratory chain contains 3 multisubunit complexes succinate dehydrogenase (complex II, CII), ubiquinol-cytochrome c oxidoreductase (cytochrome b-c1 complex, complex III, CIII) and cytochrome c oxidase (complex IV, CIV), that cooperate to transfer electrons derived from NADH and succinate to molecular oxygen, creating an electrochemical gradient over the inner membrane that drives transmembrane transport and the ATP synthase. Cytochrome c oxidase is the component of the respiratory chain that catalyzes the reduction of oxygen to water. Electrons originating from reduced cytochrome c in the intermembrane space (IMS) are transferred via the dinuclear copper A center (CU(A)) of subunit 2 and heme A of subunit 1 to the active site in subunit 1, a binuclear center (BNC) formed by heme A3 and copper B (CU(B)). The BNC reduces molecular oxygen to 2 water molecules using 4 electrons from cytochrome c in the IMS and 4 protons from the mitochondrial matrix. In Thunnus obesus (Bigeye tuna), this protein is Cytochrome c oxidase subunit 7B-heart, mitochondrial.